The primary structure comprises 131 residues: Global transcriptional regulator Spx (131 aa).

Cysteines 10 and 13 form a disulfide.

The protein belongs to the ArsC family. Spx subfamily. In terms of assembly, interacts with the C-terminal domain of the alpha subunit of the RNAP.

The protein localises to the cytoplasm. Its function is as follows. Global transcriptional regulator that plays a key role in stress response and exerts either positive or negative regulation of genes. Acts by interacting with the C-terminal domain of the alpha subunit of the RNA polymerase (RNAP). This interaction can enhance binding of RNAP to the promoter region of target genes and stimulate their transcription, or block interaction of RNAP with activator. In Shouchella clausii (strain KSM-K16) (Alkalihalobacillus clausii), this protein is Global transcriptional regulator Spx.